The primary structure comprises 217 residues: tRNA (guanine-N(7)-)-methyltransferase (217 aa).

E48, E73, N100, and D123 together coordinate S-adenosyl-L-methionine. D123 is a catalytic residue. Substrate-binding residues include K127 and D159.

It belongs to the class I-like SAM-binding methyltransferase superfamily. TrmB family.

The catalysed reaction is guanosine(46) in tRNA + S-adenosyl-L-methionine = N(7)-methylguanosine(46) in tRNA + S-adenosyl-L-homocysteine. Its pathway is tRNA modification; N(7)-methylguanine-tRNA biosynthesis. Functionally, catalyzes the formation of N(7)-methylguanine at position 46 (m7G46) in tRNA. In Leptospira interrogans serogroup Icterohaemorrhagiae serovar Lai (strain 56601), this protein is tRNA (guanine-N(7)-)-methyltransferase.